A 265-amino-acid polypeptide reads, in one-letter code: Chanoclavine-I dehydrogenase easD (265 aa).

Positions 1–20 (MSFVSSKIFAITGGASGIGA) are cleaved as a signal peptide. The NADP(+) site is built by isoleucine 18, aspartate 66, arginine 132, tyrosine 169, lysine 173, and threonine 205. Catalysis depends on tyrosine 169, which acts as the Proton donor. Lysine 173 (lowers pKa of active site Tyr) is an active-site residue.

It belongs to the short-chain dehydrogenases/reductases (SDR) family. Homotetramer.

The enzyme catalyses chanoclavine-I + NAD(+) = chanoclavine-I aldehyde + NADH + H(+). The protein operates within alkaloid biosynthesis; ergot alkaloid biosynthesis. Chanoclavine-I dehydrogenase; part of the gene cluster that mediates the biosynthesis of fungal ergot alkaloid. DmaW catalyzes the first step of ergot alkaloid biosynthesis by condensing dimethylallyl diphosphate (DMAP) and tryptophan to form 4-dimethylallyl-L-tryptophan. The second step is catalyzed by the methyltransferase easF that methylates 4-dimethylallyl-L-tryptophan in the presence of S-adenosyl-L-methionine, resulting in the formation of 4-dimethylallyl-L-abrine. The catalase easC and the FAD-dependent oxidoreductase easE then transform 4-dimethylallyl-L-abrine to chanoclavine-I which is further oxidized by easD in the presence of NAD(+), resulting in the formation of chanoclavine-I aldehyde. Chanoclavine-I aldehyde is the precursor of ergoamides and ergopeptines in Clavicipitaceae, and clavine-type alcaloids such as fumiclavine in Trichocomaceae. However, the metabolites downstream of chanoclavine-I aldehyde in Arthrodermataceae have not been identified yet. The polypeptide is Chanoclavine-I dehydrogenase easD (Trichophyton verrucosum (strain HKI 0517)).